A 457-amino-acid chain; its full sequence is tRNA modification GTPase MnmE (457 aa).

(6S)-5-formyl-5,6,7,8-tetrahydrofolate contacts are provided by arginine 25, glutamate 87, and arginine 126. Residues 223-377 (GISTAIIGRP…IEERINNLFF (155 aa)) enclose the TrmE-type G domain. Residue asparagine 233 participates in K(+) binding. GTP contacts are provided by residues 233–238 (NVGKSS), 252–258 (TDIAGTT), and 277–280 (DTAG). Residue serine 237 participates in Mg(2+) binding. Positions 252, 254, and 257 each coordinate K(+). Threonine 258 provides a ligand contact to Mg(2+). Lysine 457 provides a ligand contact to (6S)-5-formyl-5,6,7,8-tetrahydrofolate.

This sequence belongs to the TRAFAC class TrmE-Era-EngA-EngB-Septin-like GTPase superfamily. TrmE GTPase family. Homodimer. Heterotetramer of two MnmE and two MnmG subunits. It depends on K(+) as a cofactor.

Its subcellular location is the cytoplasm. Functionally, exhibits a very high intrinsic GTPase hydrolysis rate. Involved in the addition of a carboxymethylaminomethyl (cmnm) group at the wobble position (U34) of certain tRNAs, forming tRNA-cmnm(5)s(2)U34. In Streptococcus pneumoniae serotype 2 (strain D39 / NCTC 7466), this protein is tRNA modification GTPase MnmE.